The primary structure comprises 297 residues: Acetyl-coenzyme A carboxylase carboxyl transferase subunit beta (297 aa).

Positions 1-23 (MSWIERILGRTSSSSSSSKSKVP) are disordered. One can recognise a CoA carboxyltransferase N-terminal domain in the interval 26–295 (VWTKCTSCEQ…PFKTAELIVE (270 aa)). 4 residues coordinate Zn(2+): Cys30, Cys33, Cys49, and Cys52. Residues 30 to 52 (CTSCEQVLYSEELKRNMHVCPKC) form a C4-type zinc finger.

The protein belongs to the AccD/PCCB family. As to quaternary structure, acetyl-CoA carboxylase is a heterohexamer composed of biotin carboxyl carrier protein (AccB), biotin carboxylase (AccC) and two subunits each of ACCase subunit alpha (AccA) and ACCase subunit beta (AccD). Zn(2+) is required as a cofactor.

It is found in the cytoplasm. The catalysed reaction is N(6)-carboxybiotinyl-L-lysyl-[protein] + acetyl-CoA = N(6)-biotinyl-L-lysyl-[protein] + malonyl-CoA. It participates in lipid metabolism; malonyl-CoA biosynthesis; malonyl-CoA from acetyl-CoA: step 1/1. Component of the acetyl coenzyme A carboxylase (ACC) complex. Biotin carboxylase (BC) catalyzes the carboxylation of biotin on its carrier protein (BCCP) and then the CO(2) group is transferred by the transcarboxylase to acetyl-CoA to form malonyl-CoA. This is Acetyl-coenzyme A carboxylase carboxyl transferase subunit beta from Actinobacillus pleuropneumoniae serotype 3 (strain JL03).